Here is a 476-residue protein sequence, read N- to C-terminus: Proline--tRNA ligase 2 (476 aa).

Belongs to the class-II aminoacyl-tRNA synthetase family. ProS type 3 subfamily. As to quaternary structure, homodimer.

It localises to the cytoplasm. The catalysed reaction is tRNA(Pro) + L-proline + ATP = L-prolyl-tRNA(Pro) + AMP + diphosphate. Functionally, catalyzes the attachment of proline to tRNA(Pro) in a two-step reaction: proline is first activated by ATP to form Pro-AMP and then transferred to the acceptor end of tRNA(Pro). The polypeptide is Proline--tRNA ligase 2 (Bacillus thuringiensis subsp. konkukian (strain 97-27)).